The chain runs to 288 residues: 33 kDa chaperonin (288 aa).

Intrachain disulfides connect Cys-235/Cys-237 and Cys-268/Cys-271.

Belongs to the HSP33 family. Under oxidizing conditions two disulfide bonds are formed involving the reactive cysteines. Under reducing conditions zinc is bound to the reactive cysteines and the protein is inactive.

Its subcellular location is the cytoplasm. Its function is as follows. Redox regulated molecular chaperone. Protects both thermally unfolding and oxidatively damaged proteins from irreversible aggregation. Plays an important role in the bacterial defense system toward oxidative stress. The sequence is that of 33 kDa chaperonin from Streptococcus thermophilus (strain ATCC BAA-491 / LMD-9).